A 313-amino-acid chain; its full sequence is Porphobilinogen deaminase (313 aa).

Cysteine 242 bears the S-(dipyrrolylmethanemethyl)cysteine mark.

It belongs to the HMBS family. As to quaternary structure, monomer. It depends on dipyrromethane as a cofactor.

The enzyme catalyses 4 porphobilinogen + H2O = hydroxymethylbilane + 4 NH4(+). Its pathway is porphyrin-containing compound metabolism; protoporphyrin-IX biosynthesis; coproporphyrinogen-III from 5-aminolevulinate: step 2/4. In terms of biological role, tetrapolymerization of the monopyrrole PBG into the hydroxymethylbilane pre-uroporphyrinogen in several discrete steps. This is Porphobilinogen deaminase from Pseudomonas putida (strain GB-1).